The chain runs to 287 residues: MSDINLKIGLAEMLKGGVIMDVVNAEQAEIAQQAGAVAVMALERVPADIRKDGGIARMSDPKLIKEIMSVTSIPVMAKARIGHFVEAQILESLGVDFIDESEVLSPADDLNHIAKDNFKVPFVCGCTNLGEALRRIGEGAALIRTKGEAGTGNIVEAVRQLRQVNKDINYIKGADQSELMAIAKNMQAPYDLVKYVHKNGKLPVPNFSAGGVATPADAALMMQLGAESVFVGSGIFKSADPLKRAKAIVSAVTYYNDPKILAEVSEDLGEPMTGINCDFEKFSQRGW.

Asp21 contacts D-ribose 5-phosphate. Residue Lys78 is the Schiff-base intermediate with D-ribose 5-phosphate of the active site. D-ribose 5-phosphate is bound at residue Gly150. Arg162 lines the D-glyceraldehyde 3-phosphate pocket. D-ribose 5-phosphate-binding positions include Gly211 and 232-233 (GS).

Belongs to the PdxS/SNZ family. In the presence of PdxT, forms a dodecamer of heterodimers.

It carries out the reaction aldehydo-D-ribose 5-phosphate + D-glyceraldehyde 3-phosphate + L-glutamine = pyridoxal 5'-phosphate + L-glutamate + phosphate + 3 H2O + H(+). The protein operates within cofactor biosynthesis; pyridoxal 5'-phosphate biosynthesis. Functionally, catalyzes the formation of pyridoxal 5'-phosphate from ribose 5-phosphate (RBP), glyceraldehyde 3-phosphate (G3P) and ammonia. The ammonia is provided by the PdxT subunit. Can also use ribulose 5-phosphate and dihydroxyacetone phosphate as substrates, resulting from enzyme-catalyzed isomerization of RBP and G3P, respectively. The polypeptide is Pyridoxal 5'-phosphate synthase subunit PdxS (Francisella philomiragia subsp. philomiragia (strain ATCC 25017 / CCUG 19701 / FSC 153 / O#319-036)).